We begin with the raw amino-acid sequence, 299 residues long: Small ribosomal subunit biogenesis GTPase RsgA (299 aa).

The region spanning lysine 64–leucine 225 is the CP-type G domain. Residues threonine 113 to aspartate 116 and glycine 168 to threonine 176 contribute to the GTP site. Zn(2+) contacts are provided by cysteine 249, cysteine 254, histidine 256, and cysteine 262.

This sequence belongs to the TRAFAC class YlqF/YawG GTPase family. RsgA subfamily. In terms of assembly, monomer. Associates with 30S ribosomal subunit, binds 16S rRNA. It depends on Zn(2+) as a cofactor.

Its subcellular location is the cytoplasm. One of several proteins that assist in the late maturation steps of the functional core of the 30S ribosomal subunit. Helps release RbfA from mature subunits. May play a role in the assembly of ribosomal proteins into the subunit. Circularly permuted GTPase that catalyzes slow GTP hydrolysis, GTPase activity is stimulated by the 30S ribosomal subunit. The chain is Small ribosomal subunit biogenesis GTPase RsgA from Latilactobacillus sakei subsp. sakei (strain 23K) (Lactobacillus sakei subsp. sakei).